The sequence spans 146 residues: uncharacterized protein (146 aa).

Residues 86-96 (EFDSPMDEEEE) show a composition bias toward acidic residues. The tract at residues 86–124 (EFDSPMDEEEETKPREASLDQTAPKKSKKEELLVKNNNF) is disordered.

This is an uncharacterized protein from Ostreid herpesvirus 1 (isolate France) (OsHV-1).